Here is a 216-residue protein sequence, read N- to C-terminus: Octanoyltransferase (216 aa).

Positions P32–E207 constitute a BPL/LPL catalytic domain. Residues R71–H78, S138–G140, and G151–A153 contribute to the substrate site. C169 functions as the Acyl-thioester intermediate in the catalytic mechanism.

It belongs to the LipB family.

The protein resides in the cytoplasm. The catalysed reaction is octanoyl-[ACP] + L-lysyl-[protein] = N(6)-octanoyl-L-lysyl-[protein] + holo-[ACP] + H(+). Its pathway is protein modification; protein lipoylation via endogenous pathway; protein N(6)-(lipoyl)lysine from octanoyl-[acyl-carrier-protein]: step 1/2. In terms of biological role, catalyzes the transfer of endogenously produced octanoic acid from octanoyl-acyl-carrier-protein onto the lipoyl domains of lipoate-dependent enzymes. Lipoyl-ACP can also act as a substrate although octanoyl-ACP is likely to be the physiological substrate. In Pseudomonas putida (strain ATCC 47054 / DSM 6125 / CFBP 8728 / NCIMB 11950 / KT2440), this protein is Octanoyltransferase.